A 111-amino-acid polypeptide reads, in one-letter code: MTVAKELRQKSSEELVKLVIKLKGELLEYRFKLAHGELDKPHLINQTRRLLATILTILTERKLNWQEEQAKYKLLTKKTNEAAVNAWKQHLEANKAKLLKSRAKREDASKK.

The interval 1 to 85 (MTVAKELRQK…TKKTNEAAVN (85 aa)) is large ribosomal subunit protein uL29. The segment at 86–111 (AWKQHLEANKAKLLKSRAKREDASKK) is unknown.

This sequence belongs to the universal ribosomal protein uL29 family.

This Mycoplasma pneumoniae (strain ATCC 29342 / M129 / Subtype 1) (Mycoplasmoides pneumoniae) protein is Large ribosomal subunit protein uL29.